The primary structure comprises 203 residues: Small ribosomal subunit protein uS4 (203 aa).

Residues 93 to 156 (RRLDNVVYRL…MKVPAILEAV (64 aa)) form the S4 RNA-binding domain.

It belongs to the universal ribosomal protein uS4 family. In terms of assembly, part of the 30S ribosomal subunit. Contacts protein S5. The interaction surface between S4 and S5 is involved in control of translational fidelity.

Its function is as follows. One of the primary rRNA binding proteins, it binds directly to 16S rRNA where it nucleates assembly of the body of the 30S subunit. Functionally, with S5 and S12 plays an important role in translational accuracy. The sequence is that of Small ribosomal subunit protein uS4 from Streptococcus agalactiae serotype Ia (strain ATCC 27591 / A909 / CDC SS700).